Here is a 293-residue protein sequence, read N- to C-terminus: MAEGQIIKALSGFYYVLSEGRVFQCRGRGVFRKKKVTPLVGDRVVFQATSETEGYILEIGERQNELVRPPIANVEQAILVFSAVSPDFSAKLLDRFLVLVESKRITPIIVISKIDLLDGESKEEIARYVHDYRRIGYDVIETSAVTKGGLDELALRLRGRVSVVAGQSGVGKSSLLNALRPDLRLKTGDISTHLGRGKHTTRHVELLEVAGGLVADTPGFSALEFNQIELDELPHYFPEFRTYGEGCKFRGCLHIAEPKCAVREAVEAGEIPSYRYDHYVSFVAEMKERKPRY.

Residues 63–223 (QNELVRPPIA…VADTPGFSAL (161 aa)) form the CP-type G domain. Residues 112 to 115 (SKID) and 166 to 174 (GQSGVGKSS) contribute to the GTP site. 4 residues coordinate Zn(2+): Cys247, Cys252, His254, and Cys260.

The protein belongs to the TRAFAC class YlqF/YawG GTPase family. RsgA subfamily. In terms of assembly, monomer. Associates with 30S ribosomal subunit, binds 16S rRNA. The cofactor is Zn(2+).

The protein resides in the cytoplasm. Its function is as follows. One of several proteins that assist in the late maturation steps of the functional core of the 30S ribosomal subunit. Helps release RbfA from mature subunits. May play a role in the assembly of ribosomal proteins into the subunit. Circularly permuted GTPase that catalyzes slow GTP hydrolysis, GTPase activity is stimulated by the 30S ribosomal subunit. This Geobacillus kaustophilus (strain HTA426) protein is Small ribosomal subunit biogenesis GTPase RsgA.